The following is a 504-amino-acid chain: Glycerol kinase (504 aa).

Thr-12 is a binding site for ADP. Thr-12, Thr-13, and Ser-14 together coordinate ATP. Thr-12 lines the sn-glycerol 3-phosphate pocket. Arg-16 lines the ADP pocket. Residues Arg-82, Glu-83, Tyr-134, and Asp-246 each coordinate sn-glycerol 3-phosphate. The glycerol site is built by Arg-82, Glu-83, Tyr-134, Asp-246, and Gln-247. Residues Thr-268 and Gly-312 each coordinate ADP. Residues Thr-268, Gly-312, Gln-316, and Gly-413 each contribute to the ATP site. 2 residues coordinate ADP: Gly-413 and Asn-417.

This sequence belongs to the FGGY kinase family.

It carries out the reaction glycerol + ATP = sn-glycerol 3-phosphate + ADP + H(+). It participates in polyol metabolism; glycerol degradation via glycerol kinase pathway; sn-glycerol 3-phosphate from glycerol: step 1/1. Inhibited by fructose 1,6-bisphosphate (FBP). Key enzyme in the regulation of glycerol uptake and metabolism. Catalyzes the phosphorylation of glycerol to yield sn-glycerol 3-phosphate. The chain is Glycerol kinase from Renibacterium salmoninarum (strain ATCC 33209 / DSM 20767 / JCM 11484 / NBRC 15589 / NCIMB 2235).